The following is a 541-amino-acid chain: uncharacterized protein (541 aa).

The next 12 membrane-spanning stretches (helical) occupy residues 99 to 119 (WIVV…SSVY), 131 to 153 (GVSI…FGSL), 165 to 185 (FVVY…GGCA), 187 to 207 (NIWT…TPLS), 224 to 244 (YVLP…PIIG), 256 to 276 (WVFW…FFFM), 325 to 345 (LLIT…VYII), 367 to 387 (IGLS…CTPI), 409 to 429 (LYPL…FAWT), 439 to 459 (WIVP…VFFV), 472 to 494 (AASA…SLVG), and 508 to 528 (SLLG…FIYG).

The protein belongs to the major facilitator superfamily. CAR1 family.

Its subcellular location is the membrane. This is an uncharacterized protein from Schizosaccharomyces pombe (strain 972 / ATCC 24843) (Fission yeast).